The following is a 335-amino-acid chain: Dehydration-responsive element-binding protein 2A (335 aa).

Disordered stretches follow at residues 1–32 and 50–74; these read MAVY…GTTV and STKK…GPEN. Residues 19 to 55 carry the Nuclear localization signal motif; sequence RKRKSRSRGDGTTVAERLKRWKEYNETVEEVSTKKRK. Residues 52–66 show a composition bias toward basic residues; the sequence is KKRKVPAKGSKKGCM. Positions 78–135 form a DNA-binding region, AP2/ERF; that stretch reads SFRGVRQRIWGKWVAEIREPNRGSRLWLGTFPTAQEAASAYDEAAKAMYGPLARLNFP. The interval 279–304 is disordered; that stretch reads QDRYPGNSVANGSYRPESQQSGFDPL. A compositionally biased stretch (polar residues) spans 286-304; it reads SVANGSYRPESQQSGFDPL.

Belongs to the AP2/ERF transcription factor family. ERF subfamily. As to quaternary structure, interacts with MED25. Binds to DPB3-1 in the nucleus during heat-stress. Ubiquitinated by DRIP1 and DRIP2. Ubiquitination probably leads to its subsequent degradation, thus negatively regulating response to drought. In terms of tissue distribution, expressed preferentially in roots and stems, and at a lower level in leaves.

The protein resides in the nucleus. Functionally, transcriptional activator that binds specifically to the DNA sequence 5'-[AG]CCGAC-3'. Binding to the C-repeat/DRE element mediates high salinity- and dehydration-inducible transcription. Promotes the expression of heat stress-inducible genes by contributing to the formation of a heat stress-specific transcriptional complex with NF-Y subunits (e.g. DPB3-1, NF-YA2 and NF-YB3) at the promoter of target genes, thus promoting heat tolerance. In Arabidopsis thaliana (Mouse-ear cress), this protein is Dehydration-responsive element-binding protein 2A.